A 181-amino-acid chain; its full sequence is UPF0301 protein COXBURSA331_A2219 (181 aa).

Belongs to the UPF0301 (AlgH) family.

In Coxiella burnetii (strain RSA 331 / Henzerling II), this protein is UPF0301 protein COXBURSA331_A2219.